A 155-amino-acid chain; its full sequence is MKAVIQRVSEAGVKVDGRTVGAVERGILVLLGVEKGDSTKEADWLAEKIVNLRIFEDAAGKMNLSLLDIKGELLAVSQFTLAGNCSKGRRPSFDTAAPPEEAIQLYEYFVGKTWELGIPVQTGIFQADMKVSLVNDGPVTFILETPKNKERGTRS.

Residues G137 to P138 carry the Gly-cisPro motif, important for rejection of L-amino acids motif.

The protein belongs to the DTD family. As to quaternary structure, homodimer.

The protein localises to the cytoplasm. The catalysed reaction is glycyl-tRNA(Ala) + H2O = tRNA(Ala) + glycine + H(+). It catalyses the reaction a D-aminoacyl-tRNA + H2O = a tRNA + a D-alpha-amino acid + H(+). Its function is as follows. An aminoacyl-tRNA editing enzyme that deacylates mischarged D-aminoacyl-tRNAs. Also deacylates mischarged glycyl-tRNA(Ala), protecting cells against glycine mischarging by AlaRS. Acts via tRNA-based rather than protein-based catalysis; rejects L-amino acids rather than detecting D-amino acids in the active site. By recycling D-aminoacyl-tRNA to D-amino acids and free tRNA molecules, this enzyme counteracts the toxicity associated with the formation of D-aminoacyl-tRNA entities in vivo and helps enforce protein L-homochirality. The sequence is that of D-aminoacyl-tRNA deacylase from Geotalea uraniireducens (strain Rf4) (Geobacter uraniireducens).